The chain runs to 119 residues: MPRVKGGYVARRRRKKVLKLAKGYFGSKHTLFKSAQGQVMKSLQYAYRDRRQKKRDFRKLWITRINAAARLNGLSYSRLMHGLKLAGINVNRKMLADLAINDEKAFAQLAEKAKASLNN.

This sequence belongs to the bacterial ribosomal protein bL20 family.

Functionally, binds directly to 23S ribosomal RNA and is necessary for the in vitro assembly process of the 50S ribosomal subunit. It is not involved in the protein synthesizing functions of that subunit. The protein is Large ribosomal subunit protein bL20 of Halalkalibacterium halodurans (strain ATCC BAA-125 / DSM 18197 / FERM 7344 / JCM 9153 / C-125) (Bacillus halodurans).